The primary structure comprises 736 residues: Gephyrin (736 aa).

An MPT Mo-transferase region spans residues 14 to 166 (QIRVGVLTVS…FILPALPHAI (153 aa)). Positions 140 to 316 (LIINLPGSKK…VDITKVARRH (177 aa)) are interaction with GABARAP. Disordered regions lie at residues 181–232 (DELE…DSSS) and 260–290 (TASL…PKVQ). Residues 187–199 (PSPPPPLSPPPTT) are compositionally biased toward pro residues. Phosphoserine is present on residues S188 and S194. T198 is modified (phosphothreonine). At S200 the chain carries Phosphoserine. The S-palmitoyl cysteine moiety is linked to residue C212. Residues 261–290 (ASLSTTPSESPRAQATSRLSTASCPTPKVQ) show a composition bias toward polar residues. S262 is subject to Phosphoserine. Phosphothreonine is present on residues T265 and T266. 2 positions are modified to phosphoserine: S268 and S270. The S-palmitoyl cysteine moiety is linked to residue C284. Phosphoserine is present on S305. Positions 326-736 (MDKAFITVLE…VVDVMVIGRL (411 aa)) are MPT adenylyltransferase.

This sequence in the N-terminal section; belongs to the MoaB/Mog family. It in the C-terminal section; belongs to the MoeA family. As to quaternary structure, homotrimer, homodimer and homooligomer. Interacts with GABARAP. Interacts with SRGAP2 (via SH3 domain). Interacts with GABRA3. Interacts with GLRB. GABRA3 and GLRB occupy overlapping binding sites. Interacts with ARHGAP32; IQSEC3, INSYN1 and INSYN2A. Requires Mg(2+) as cofactor. In terms of processing, palmitoylated. Palmitoylation is stimulated by GABA type A receptors activity. Palmitoylation by ZDHHC12 regulates clustering at synapses.

The protein resides in the postsynaptic cell membrane. The protein localises to the cell membrane. It is found in the cytoplasm. It localises to the cytosol. Its subcellular location is the cytoskeleton. The protein resides in the cell projection. The protein localises to the dendrite. It is found in the postsynaptic density. It carries out the reaction molybdopterin + ATP + H(+) = adenylyl-molybdopterin + diphosphate. It catalyses the reaction adenylyl-molybdopterin + molybdate = Mo-molybdopterin + AMP + H(+). It participates in cofactor biosynthesis; molybdopterin biosynthesis. With respect to regulation, inhibited by copper and tungsten. Microtubule-associated protein involved in membrane protein-cytoskeleton interactions. It is thought to anchor the inhibitory glycine receptor (GLYR) to subsynaptic microtubules. Acts as a major instructive molecule at inhibitory synapses, where it also clusters GABA type A receptors. Its function is as follows. Also has a catalytic activity and catalyzes two steps in the biosynthesis of the molybdenum cofactor. In the first step, molybdopterin is adenylated. Subsequently, molybdate is inserted into adenylated molybdopterin and AMP is released. The protein is Gephyrin of Homo sapiens (Human).